A 340-amino-acid chain; its full sequence is Arginase 1, mitochondrial (340 aa).

The transit peptide at 1–24 (MGGVAAGTRWIHHVRRLSAAKVSA) directs the protein to the mitochondrion. Mn(2+) is bound by residues His-159, Asp-183, His-185, and Asp-187. Substrate contacts are provided by residues 185–189 (HPDIY) and 193–195 (EGN). Mn(2+) contacts are provided by Asp-268 and Asp-270. Substrate is bound at residue Glu-311.

It belongs to the arginase family. Requires Mn(2+) as cofactor.

It is found in the mitochondrion. The enzyme catalyses L-arginine + H2O = urea + L-ornithine. Its pathway is nitrogen metabolism; urea cycle; L-ornithine and urea from L-arginine: step 1/1. Functionally, catalyzes the hydrolysis of L-arginine to urea and L-ornithine. The latter can be utilized in the urea cycle or as a precursor for the synthesis of both polyamines and proline. This Oryza sativa subsp. japonica (Rice) protein is Arginase 1, mitochondrial (ARG1).